Reading from the N-terminus, the 293-residue chain is Indole-3-glycerol phosphate synthase (293 aa).

Belongs to the TrpC family.

The enzyme catalyses 1-(2-carboxyphenylamino)-1-deoxy-D-ribulose 5-phosphate + H(+) = (1S,2R)-1-C-(indol-3-yl)glycerol 3-phosphate + CO2 + H2O. The protein operates within amino-acid biosynthesis; L-tryptophan biosynthesis; L-tryptophan from chorismate: step 4/5. This chain is Indole-3-glycerol phosphate synthase, found in Rippkaea orientalis (strain PCC 8801 / RF-1) (Cyanothece sp. (strain PCC 8801)).